Consider the following 348-residue polypeptide: Ribonuclease H (348 aa).

Positions 54 to 65 are enriched in polar residues; it reads NTTSNYGSSTHA. Residues 54-81 form a disordered region; it reads NTTSNYGSSTHAGGQVSKPHTTQKRVHR. The region spanning 184-346 is the RNase H type-1 domain; that stretch reads YNKSMNVYCD…ADFLAKKGAS (163 aa). Mg(2+)-binding residues include Asp-193, Glu-235, Asp-264, and Asp-338.

This sequence belongs to the RNase H family. Mg(2+) serves as cofactor.

It catalyses the reaction Endonucleolytic cleavage to 5'-phosphomonoester.. Endonuclease that specifically degrades the RNA of RNA-DNA hybrids. The protein is Ribonuclease H (RNH1) of Saccharomyces cerevisiae (strain ATCC 204508 / S288c) (Baker's yeast).